The sequence spans 299 residues: MTDNTRLRIAMQKSGRLSDDSRELLARCGIKINLHTQRLIAMAENMPIDILRVRDDDIPGLVMDGVVDLGIIGENVLEEELLNRRAQGEDPRYFTLRRLDFGGCRLSLATPIDEAWDGPLSLNGKRIATSYPHLLKRYLDQKGISFKSCLLNGSVEVAPRAGLADAICDLVSTGATLEANGLREVEVIYRSKACLIQRDGEMEESKQQLIDKLLTRIQGVIQARESKYIMMHAPTERLDEVIALLPGAERPTILPLAGDQQRVAMHMVSSETLFWETMEKLKALGASSILVLPIEKMME.

The protein belongs to the ATP phosphoribosyltransferase family. Long subfamily. As to quaternary structure, equilibrium between an active dimeric form, an inactive hexameric form and higher aggregates. Interconversion between the various forms is largely reversible and is influenced by the natural substrates and inhibitors of the enzyme. Mg(2+) serves as cofactor.

The protein resides in the cytoplasm. It carries out the reaction 1-(5-phospho-beta-D-ribosyl)-ATP + diphosphate = 5-phospho-alpha-D-ribose 1-diphosphate + ATP. It participates in amino-acid biosynthesis; L-histidine biosynthesis; L-histidine from 5-phospho-alpha-D-ribose 1-diphosphate: step 1/9. With respect to regulation, feedback inhibited by histidine. Catalyzes the condensation of ATP and 5-phosphoribose 1-diphosphate to form N'-(5'-phosphoribosyl)-ATP (PR-ATP). Has a crucial role in the pathway because the rate of histidine biosynthesis seems to be controlled primarily by regulation of HisG enzymatic activity. This is ATP phosphoribosyltransferase from Shigella dysenteriae serotype 1 (strain Sd197).